A 247-amino-acid polypeptide reads, in one-letter code: Oil body-associated protein 2B (247 aa).

Residues 1–28 form a disordered region; sequence MASSDKVPVACPASSGDGKEPMGNPTKT.

This sequence belongs to the OBAP family.

The polypeptide is Oil body-associated protein 2B (Arabidopsis thaliana (Mouse-ear cress)).